The sequence spans 396 residues: Nitrate regulatory protein (396 aa).

One can recognise an NIT domain in the interval 37 to 284 (GQISALVHML…VDLLNAADAL (248 aa)). The region spanning 323-384 (LQQLSGQLAS…RMVEIARALL (62 aa)) is the ANTAR domain.

In terms of biological role, nitrate- and nitrite-responsive positive regulator for nasFEDCBA operon expression. NasR protein binds to the factor-independent terminator site located in the nasF operon leader RNA to effect transcription antitermination. This chain is Nitrate regulatory protein (nasR), found in Klebsiella oxytoca.